A 278-amino-acid polypeptide reads, in one-letter code: Probable F-box protein At1g14315 (278 aa).

One can recognise an F-box domain in the interval 1 to 43; the sequence is MQLLPHDTVEDILERVPVKSLLRFKSACKQWKLTIESQYFQAK.

The chain is Probable F-box protein At1g14315 from Arabidopsis thaliana (Mouse-ear cress).